The primary structure comprises 123 residues: Large ribosomal subunit protein bL19 (123 aa).

Belongs to the bacterial ribosomal protein bL19 family.

This protein is located at the 30S-50S ribosomal subunit interface and may play a role in the structure and function of the aminoacyl-tRNA binding site. The chain is Large ribosomal subunit protein bL19 from Acinetobacter baylyi (strain ATCC 33305 / BD413 / ADP1).